A 406-amino-acid chain; its full sequence is Tyrosine--tRNA ligase (406 aa).

L-tyrosine is bound at residue Tyr-35. The 'HIGH' region signature appears at 40–49; it reads PTADSLHVGH. Residues Tyr-168 and Gln-172 each contribute to the L-tyrosine site. Residues 228-232 carry the 'KMSKS' region motif; that stretch reads KMGKT. Lys-231 lines the ATP pocket. An S4 RNA-binding domain is found at 340–404; sequence SELLDILVEA…RGKKNYNKIV (65 aa).

The protein belongs to the class-I aminoacyl-tRNA synthetase family. TyrS type 1 subfamily. Homodimer.

It localises to the cytoplasm. The enzyme catalyses tRNA(Tyr) + L-tyrosine + ATP = L-tyrosyl-tRNA(Tyr) + AMP + diphosphate + H(+). Its function is as follows. Catalyzes the attachment of tyrosine to tRNA(Tyr) in a two-step reaction: tyrosine is first activated by ATP to form Tyr-AMP and then transferred to the acceptor end of tRNA(Tyr). The chain is Tyrosine--tRNA ligase from Clostridium perfringens (strain ATCC 13124 / DSM 756 / JCM 1290 / NCIMB 6125 / NCTC 8237 / Type A).